Here is a 430-residue protein sequence, read N- to C-terminus: SH3 domain-containing protein PJ696.02 (430 aa).

Residues 237–372 (EPEDIWGPSS…KPKFKQDSLG (136 aa)) form a disordered region. The segment covering 263–277 (RRGDSYRSNRSRAHD) has biased composition (basic and acidic residues). Residue Ser-285 is modified to Phosphoserine. A compositionally biased stretch (basic and acidic residues) spans 304 to 313 (SKMDNRRSKY). Thr-316 carries the phosphothreonine modification. Ser-318 and Ser-324 each carry phosphoserine. Tyr-325 carries the phosphotyrosine modification. Residues Ser-326, Ser-354, and Ser-406 each carry the phosphoserine modification. Residues 333–358 (VYSSDVSTESSSQFSSRSSEYSKPSR) are compositionally biased toward low complexity. Residues 371–430 (LGPNQARAMYSFAGEQPGDLSFQKGDIIDIVERSGSHDDWWTGRIGYREGIFPANYVKLS) enclose the SH3 domain.

It belongs to the SH3YL1 family.

This chain is SH3 domain-containing protein PJ696.02, found in Schizosaccharomyces pombe (strain 972 / ATCC 24843) (Fission yeast).